The primary structure comprises 79 residues: Crassicorin-I (79 aa).

Positions 1 to 19 (MKLFLVSIVLVGMLVLAAA) are cleaved as a signal peptide. Residues 20 to 39 (RPERDIDSFDEQEEKGFVKR) constitute a propeptide that is removed on maturation. Disulfide bonds link cysteine 43–cysteine 76, cysteine 45–cysteine 69, and cysteine 59–cysteine 77.

This sequence belongs to the sea anemone type 3 (BDS) potassium channel toxin family. In terms of tissue distribution, highly expressed by the mesenteries. Moderately expressed by the pharynx. Weakly expressed by the gonad and pedal disk. No expression in tentacle.

It is found in the secreted. Its subcellular location is the nematocyst. Peptide with both antimicrobial and neurotoxin activities. Cationic AMP with antibacterial activity against both Gram-positive bacteria (B.subtilis, MIC=11.49 ug/mL) and Gram-negative bacteria (E.coli (MIC=12.21 ug/mL) and S.enterica (MIC=11.95 ug/mL)). Shows no significant antimicrobial activity against bacteria S.aureus and P.aeruginosa, as well as the fungus C.albicans. In vivo, induces reversible paralytic activity towards the shrimp P.paucidens. May act by impairing sodium or potassium channels in the prey. In Urticina crassicornis (Mottled anemone), this protein is Crassicorin-I.